An 887-amino-acid chain; its full sequence is Phosphatidylinositol 3-kinase catalytic subunit type 3 (887 aa).

In terms of domain architecture, C2 PI3K-type spans 35-184 (YKAVLEDPML…LAKLTKAHRQ (150 aa)). Positions 150–170 (EADGSEPTKTPGRTSSTLSED) are disordered. A compositionally biased stretch (polar residues) spans 156-170 (PTKTPGRTSSTLSED). Threonine 163 carries the post-translational modification Phosphothreonine; by AMPK. Phosphoserine; by AMPK is present on serine 165. 3 positions are modified to phosphoserine: serine 244, serine 261, and serine 282. A PIK helical domain is found at 282 to 520 (SDHGLKPNAA…PKTHEMYLNV (239 aa)). 2 disordered regions span residues 416 to 435 (EPTK…NSGI) and 446 to 468 (ITSP…SSDG). Residues 423–435 (QGSVSESVSNSGI) are compositionally biased toward low complexity. Residues 449–459 (PLPPVSSPPPA) are compositionally biased toward pro residues. The PI3K/PI4K catalytic domain occupies 605–871 (IPETATLFKS…LIDESVHALF (267 aa)). The tract at residues 611–617 (LFKSALM) is G-loop. The tract at residues 740 to 748 (GVGDRHLDN) is catalytic loop. An activation loop region spans residues 759–780 (HIDFGYILGRDPKPLPPPMKLN).

Belongs to the PI3/PI4-kinase family. As to quaternary structure, component of the PI3K (PI3KC3/PI3K-III/class III phosphatidylinositol 3-kinase) complex the core of which is composed of the catalytic subunit PIK3C3, the regulatory subunit PIK3R4 and BECN1 associating with additional regulatory/auxiliary subunits to form alternative complex forms. Alternative complex forms containing a fourth regulatory subunit in a mutually exclusive manner are: the PI3K complex I (PI3KC3-C1) containing ATG14, and the PI3K complex II (PI3KC3-C2) containing UVRAG. PI3KC3-C1 displays a V-shaped architecture with PIK3R4 serving as a bridge between PIK3C3 and the ATG14:BECN1 subcomplex. Both, PI3KC3-C1 and PI3KC3-C2, can associate with further regulatory subunits such as RUBCN, SH3GLB1/Bif-1 and AMBRA1. PI3KC3-C1 probably associates with PIK3CB. Interacts with RAB7A in the presence of PIK3R4. Interacts with AMBRA1. Interacts with BECN1P1/BECN2. Interacts with SLAMF1. May be a component of a complex composed of RAB5A (in GDP-bound form), DYN2 and PIK3C3. Interacts with NCKAP1L. Interacts with ATG14; this interaction is increased in the absence of TMEM39A. Interacts with STEEP1; the interaction is STING1-dependent and required for trafficking of STING1 from the endoplasmic reticulum. Interacts with YWHAG. Interacts with ARMC3. Mn(2+) serves as cofactor. In terms of processing, ubiquitinated via 'Lys-29'- and 'Lys-48'-linked ubiquitination by UBE3C, promoting its degradation. Deubiquitination by ZRANB1/TRABID promotes its stabilization, leading to autophagosome maturation.

It is found in the midbody. The protein localises to the late endosome. It localises to the cytoplasmic vesicle. The protein resides in the autophagosome. The enzyme catalyses a 1,2-diacyl-sn-glycero-3-phospho-(1D-myo-inositol) + ATP = a 1,2-diacyl-sn-glycero-3-phospho-(1D-myo-inositol-3-phosphate) + ADP + H(+). Its function is as follows. Catalytic subunit of the PI3K complex that mediates formation of phosphatidylinositol 3-phosphate; different complex forms are believed to play a role in multiple membrane trafficking pathways: PI3KC3-C1 is involved in initiation of autophagosomes and PI3KC3-C2 in maturation of autophagosomes and endocytosis. As part of PI3KC3-C1, promotes endoplasmic reticulum membrane curvature formation prior to vesicle budding. Involved in regulation of degradative endocytic trafficking and required for the abscission step in cytokinesis, probably in the context of PI3KC3-C2. Involved in the transport of lysosomal enzyme precursors to lysosomes. Required for transport from early to late endosomes. The polypeptide is Phosphatidylinositol 3-kinase catalytic subunit type 3 (Sus scrofa (Pig)).